We begin with the raw amino-acid sequence, 158 residues long: Ribosome biogenesis protein ALB1 (158 aa).

The segment covering 1 to 18 has biased composition (polar residues); that stretch reads MPSKNSINRPKLTVNLNK. The disordered stretch occupies residues 1–51; that stretch reads MPSKNSINRPKLTVNLNKKSQRLGQKRADRERKGLLQPERSSEASKSGEIK. Residues 26–49 are compositionally biased toward basic and acidic residues; it reads KRADRERKGLLQPERSSEASKSGE.

Belongs to the ALB1 family. Component of the nucleoplasmic and cytoplasmic pre-60S ribosomal particles.

The protein localises to the cytoplasm. Its subcellular location is the nucleus. Involved in proper assembly of pre-ribosomal particles during the biogenesis of the 60S ribosomal subunit. Accompanies the pre-60S particles to the cytoplasm. This Vanderwaltozyma polyspora (strain ATCC 22028 / DSM 70294 / BCRC 21397 / CBS 2163 / NBRC 10782 / NRRL Y-8283 / UCD 57-17) (Kluyveromyces polysporus) protein is Ribosome biogenesis protein ALB1 (ALB1).